Consider the following 238-residue polypeptide: CD63 antigen (238 aa).

Residues 2–11 (AVEGGMKCVK) are Cytoplasmic-facing. A helical transmembrane segment spans residues 12 to 32 (FLLYVLLLAFCACAVGLIAIG). The Extracellular portion of the chain corresponds to 33 to 51 (VAVQVVLKQAITHETTAGS). The helical transmembrane segment at 52–72 (LLPVVIIAVGAFLFLVAFVGC) threads the bilayer. Topologically, residues 73–81 (CGACKENYC) are cytoplasmic. Residues 82-102 (LMITFAIFLSLIMLVEVAVAI) form a helical membrane-spanning segment. The Extracellular segment spans residues 103–203 (AGYVFRDQVK…TIAAWLRKNV (101 aa)). Residues N130, N150, and N172 are each glycosylated (N-linked (GlcNAc...) asparagine). A helical membrane pass occupies residues 204 to 224 (LLVAGAALGIAFVEVLGIIFS). Topologically, residues 225 to 238 (CCLVKSIRSGYEVM) are cytoplasmic. Positions 234-238 (GYEVM) match the Lysosomal targeting motif motif.

The protein belongs to the tetraspanin (TM4SF) family. As to quaternary structure, interacts with TIMP1 and ITGB1 and recruits TIMP1 to ITGB1. Interacts with CD9. Identified in a complex with CD9 and ITGB3. Interacts with PMEL. Interacts with KDR/VEGFR2; identified in a complex with ITGB1 and KDR/VEGFR2 and is required to recruit KDR to ITGB1 complexes. Interacts with SYT7. Post-translationally, palmitoylated at a low, basal level in unstimulated platelets. The level of palmitoylation increases when platelets are activated by thrombin (in vitro). In terms of tissue distribution, detected in mast cells and platelets (at protein level).

It localises to the cell membrane. The protein resides in the lysosome membrane. The protein localises to the late endosome membrane. Its subcellular location is the endosome. It is found in the multivesicular body. It localises to the melanosome. The protein resides in the secreted. The protein localises to the extracellular exosome. Its subcellular location is the cell surface. Functionally, functions as a cell surface receptor for TIMP1 and plays a role in the activation of cellular signaling cascades. Plays a role in the activation of ITGB1 and integrin signaling, leading to the activation of AKT, FAK/PTK2 and MAP kinases. Promotes cell survival, reorganization of the actin cytoskeleton, cell adhesion, spreading and migration, via its role in the activation of AKT and FAK/PTK2. Plays a role in VEGFA signaling via its role in regulating the internalization of KDR/VEGFR2. Plays a role in intracellular vesicular transport processes, and is required for normal trafficking of the PMEL luminal domain that is essential for the development and maturation of melanocytes. Plays a role in the adhesion of leukocytes onto endothelial cells via its role in the regulation of SELP trafficking. May play a role in mast cell degranulation in response to Ms4a2/FceRI stimulation, but not in mast cell degranulation in response to other stimuli. The polypeptide is CD63 antigen (Cd63) (Rattus norvegicus (Rat)).